Here is a 442-residue protein sequence, read N- to C-terminus: Tryptophan synthase beta chain 2 (442 aa).

K122 carries the post-translational modification N6-(pyridoxal phosphate)lysine.

It belongs to the TrpB family. As to quaternary structure, tetramer of two alpha and two beta chains. The cofactor is pyridoxal 5'-phosphate.

The catalysed reaction is (1S,2R)-1-C-(indol-3-yl)glycerol 3-phosphate + L-serine = D-glyceraldehyde 3-phosphate + L-tryptophan + H2O. The protein operates within amino-acid biosynthesis; L-tryptophan biosynthesis; L-tryptophan from chorismate: step 5/5. The beta subunit is responsible for the synthesis of L-tryptophan from indole and L-serine. The chain is Tryptophan synthase beta chain 2 (trpB2) from Methanosarcina acetivorans (strain ATCC 35395 / DSM 2834 / JCM 12185 / C2A).